The chain runs to 223 residues: Large ribosomal subunit protein uL4 (223 aa).

Residues 49–106 (AAARQGTHSTKTRGEVSGGGRKPYRQKGTGRARQGSTRAPQFTGGGVVHGPKPRDYSQ) form a disordered region.

It belongs to the universal ribosomal protein uL4 family. Part of the 50S ribosomal subunit.

Its function is as follows. One of the primary rRNA binding proteins, this protein initially binds near the 5'-end of the 23S rRNA. It is important during the early stages of 50S assembly. It makes multiple contacts with different domains of the 23S rRNA in the assembled 50S subunit and ribosome. Forms part of the polypeptide exit tunnel. The protein is Large ribosomal subunit protein uL4 of Mycobacterium bovis (strain ATCC BAA-935 / AF2122/97).